We begin with the raw amino-acid sequence, 273 residues long: Large ribosomal subunit protein uL2 (273 aa).

Residues 221 to 263 are disordered; it reads RGTAMNPVDHPHGGGEGRNFGKHPVSPWGLKTKGKKTRRNKRT. The segment covering 252–263 has biased composition (basic residues); that stretch reads TKGKKTRRNKRT.

It belongs to the universal ribosomal protein uL2 family. In terms of assembly, part of the 50S ribosomal subunit. Forms a bridge to the 30S subunit in the 70S ribosome.

In terms of biological role, one of the primary rRNA binding proteins. Required for association of the 30S and 50S subunits to form the 70S ribosome, for tRNA binding and peptide bond formation. It has been suggested to have peptidyltransferase activity; this is somewhat controversial. Makes several contacts with the 16S rRNA in the 70S ribosome. In Buchnera aphidicola subsp. Cinara cedri (strain Cc), this protein is Large ribosomal subunit protein uL2.